A 257-amino-acid chain; its full sequence is Pantothenate synthetase (257 aa).

29–36 contacts ATP; the sequence is MGNLHAGH. The Proton donor role is filled by H36. Q60 serves as a coordination point for (R)-pantoate. Q60 is a beta-alanine binding site. 145 to 148 contributes to the ATP binding site; the sequence is GEKD. Q151 is a binding site for (R)-pantoate. ATP-binding positions include V174 and 182-185; that span reads LSSR.

The protein belongs to the pantothenate synthetase family. As to quaternary structure, homodimer.

The protein localises to the cytoplasm. It catalyses the reaction (R)-pantoate + beta-alanine + ATP = (R)-pantothenate + AMP + diphosphate + H(+). The protein operates within cofactor biosynthesis; (R)-pantothenate biosynthesis; (R)-pantothenate from (R)-pantoate and beta-alanine: step 1/1. In terms of biological role, catalyzes the condensation of pantoate with beta-alanine in an ATP-dependent reaction via a pantoyl-adenylate intermediate. In Coxiella burnetii (strain Dugway 5J108-111), this protein is Pantothenate synthetase.